Consider the following 391-residue polypeptide: GDSL esterase/lipase 22 (391 aa).

The N-terminal stretch at 1–29 (MMANNCNLVSVLCVILVLTLFHNPITVAG) is a signal peptide. Serine 43 functions as the Nucleophile in the catalytic mechanism. 3 N-linked (GlcNAc...) asparagine glycosylation sites follow: asparagine 105, asparagine 165, and asparagine 288. Residues aspartate 322 and histidine 325 contribute to the active site. The tract at residues 372 to 391 (PATVHASDSSSSTSRGYEYY) is disordered.

The protein belongs to the 'GDSL' lipolytic enzyme family. In terms of assembly, component of the PYK10 complex, at least composed of PYK10/BGLU23, BGLU21, BGLU22, JAL22, JAL23, PBP1/JAL30, PBP2/JAL31, JAL32, JAL33, JAL34, JAL35, GLL22 and GLL23.

It is found in the secreted. In Arabidopsis thaliana (Mouse-ear cress), this protein is GDSL esterase/lipase 22 (GLL22).